Consider the following 225-residue polypeptide: 7-cyano-7-deazaguanine synthase (225 aa).

Position 9–19 (L9–L19) interacts with ATP. The Zn(2+) site is built by C189, C199, C202, and C205.

It belongs to the QueC family. Zn(2+) serves as cofactor.

The catalysed reaction is 7-carboxy-7-deazaguanine + NH4(+) + ATP = 7-cyano-7-deazaguanine + ADP + phosphate + H2O + H(+). It functions in the pathway purine metabolism; 7-cyano-7-deazaguanine biosynthesis. Functionally, catalyzes the ATP-dependent conversion of 7-carboxy-7-deazaguanine (CDG) to 7-cyano-7-deazaguanine (preQ(0)). The polypeptide is 7-cyano-7-deazaguanine synthase (Dechloromonas aromatica (strain RCB)).